A 323-amino-acid chain; its full sequence is Fos-related antigen 2 (323 aa).

The span at 1–27 shows a compositional bias: low complexity; the sequence is MYQDYPGSFDTSSRGSSGSPGHPEPYS. The interval 1–31 is disordered; that stretch reads MYQDYPGSFDTSSRGSSGSPGHPEPYSAGAA. One can recognise a bZIP domain in the interval 124-187; sequence EEKRRIRRER…EKLEFMLVAH (64 aa). The tract at residues 126–128 is basic motif; it reads KRR. The interval 129–136 is leucine-zipper; the sequence is IRRERNKL. Disordered stretches follow at residues 194–214 and 288–323; these read SPEERRSPPTSSLQSVRTGAS and ESPLSPSESCSKAHRRSSSSGDQSSDSLNSPTLLAL. The segment covering 305–317 has biased composition (low complexity); sequence SSSGDQSSDSLNS.

It belongs to the bZIP family. Fos subfamily. In terms of assembly, heterodimer with JUN.

The protein localises to the nucleus. The polypeptide is Fos-related antigen 2 (FOSL2) (Gallus gallus (Chicken)).